The following is a 194-amino-acid chain: MSKVDVVDILKKSDALLEGHFLLSSGKHSNRYVQCAKVLRFPEYAAEVLSTVVEQIKDLDIDLVVGPAMGGVIVSYELGRQLGKEAVFTERKDNTMELRRGFEVKKGAKIIIAEDVVTTGKSTMETKRVLEALGGEVVGVACIADRTNHDIGMPIYSAIKLDIQVYESDECPLCKEGKLPVVKPGSREFKELGM.

114–122 (EDVVTTGKS) lines the 5-phospho-alpha-D-ribose 1-diphosphate pocket. The orotate site is built by Thr118 and Arg146.

This sequence belongs to the purine/pyrimidine phosphoribosyltransferase family. PyrE subfamily. Homodimer. Requires Mg(2+) as cofactor.

It catalyses the reaction orotidine 5'-phosphate + diphosphate = orotate + 5-phospho-alpha-D-ribose 1-diphosphate. The protein operates within pyrimidine metabolism; UMP biosynthesis via de novo pathway; UMP from orotate: step 1/2. In terms of biological role, catalyzes the transfer of a ribosyl phosphate group from 5-phosphoribose 1-diphosphate to orotate, leading to the formation of orotidine monophosphate (OMP). In Clostridioides difficile (strain 630) (Peptoclostridium difficile), this protein is Orotate phosphoribosyltransferase.